We begin with the raw amino-acid sequence, 293 residues long: 33 kDa chaperonin (293 aa).

Disulfide bonds link cysteine 237-cysteine 239 and cysteine 271-cysteine 274.

Belongs to the HSP33 family. Under oxidizing conditions two disulfide bonds are formed involving the reactive cysteines. Under reducing conditions zinc is bound to the reactive cysteines and the protein is inactive.

The protein localises to the cytoplasm. In terms of biological role, redox regulated molecular chaperone. Protects both thermally unfolding and oxidatively damaged proteins from irreversible aggregation. Plays an important role in the bacterial defense system toward oxidative stress. This chain is 33 kDa chaperonin, found in Haemophilus influenzae (strain PittEE).